The sequence spans 367 residues: 3-isopropylmalate dehydrogenase (367 aa).

Gly-75–Glu-88 is a binding site for NAD(+). Substrate contacts are provided by Arg-95, Arg-105, Arg-133, and Asp-230. Residues Asp-230, Asp-254, and Asp-258 each contribute to the Mg(2+) site. NAD(+) is bound at residue Gly-288–Asn-300.

This sequence belongs to the isocitrate and isopropylmalate dehydrogenases family. LeuB type 1 subfamily. Homodimer. The cofactor is Mg(2+). Mn(2+) serves as cofactor.

It is found in the cytoplasm. The enzyme catalyses (2R,3S)-3-isopropylmalate + NAD(+) = 4-methyl-2-oxopentanoate + CO2 + NADH. Its pathway is amino-acid biosynthesis; L-leucine biosynthesis; L-leucine from 3-methyl-2-oxobutanoate: step 3/4. Its function is as follows. Catalyzes the oxidation of 3-carboxy-2-hydroxy-4-methylpentanoate (3-isopropylmalate) to 3-carboxy-4-methyl-2-oxopentanoate. The product decarboxylates to 4-methyl-2 oxopentanoate. The sequence is that of 3-isopropylmalate dehydrogenase from Psychrobacter cryohalolentis (strain ATCC BAA-1226 / DSM 17306 / VKM B-2378 / K5).